The primary structure comprises 123 residues: Sirohydrochlorin cobaltochelatase (123 aa).

Residue histidine 9 is the Proton acceptor of the active site. Residue histidine 9 participates in Co(2+) binding. Residues glutamate 43 and 68 to 73 each bind substrate; that span reads FAAGMH. Histidine 73 contributes to the Co(2+) binding site.

The protein belongs to the CbiX family. CbiXS subfamily. Homotetramer; dimer of dimers.

The enzyme catalyses Co-sirohydrochlorin + 2 H(+) = sirohydrochlorin + Co(2+). It participates in cofactor biosynthesis; adenosylcobalamin biosynthesis; cob(II)yrinate a,c-diamide from sirohydrochlorin (anaerobic route): step 1/10. Functionally, catalyzes the insertion of Co(2+) into sirohydrochlorin as part of the anaerobic pathway to cobalamin biosynthesis. This is Sirohydrochlorin cobaltochelatase from Sulfolobus acidocaldarius (strain ATCC 33909 / DSM 639 / JCM 8929 / NBRC 15157 / NCIMB 11770).